The primary structure comprises 243 residues: Outer membrane protein A (243 aa).

A run of 5 beta stranded transmembrane segments spans residues 1–8 (LTAKLGYP), 13–21 (LDIYTRLGG), 47–56 (PVFAGGLEWA), 61–68 (IATRLEYQ), and 87–95 (LLSVGVSYR). 4 consecutive repeat copies span residues 107-108 (AP), 109-110 (AP), 111-112 (AP), and 113-114 (AP). Residues 107–114 (APAPAPAP) are 4 X 2 AA tandem repeats of A-P. Residues 116–243 (VQTKHFTLKS…RRVEIEVKGI (128 aa)) enclose the OmpA-like domain. Cys217 and Cys229 are joined by a disulfide.

This sequence belongs to the outer membrane OOP (TC 1.B.6) superfamily. OmpA family. In terms of assembly, monomer and homodimer.

It is found in the cell outer membrane. With TolR probably plays a role in maintaining the position of the peptidoglycan cell wall in the periplasm. Acts as a porin with low permeability that allows slow penetration of small solutes; an internal gate slows down solute passage. The polypeptide is Outer membrane protein A (Atlantibacter hermannii (Escherichia hermannii)).